Reading from the N-terminus, the 469-residue chain is Glutamate--tRNA ligase (469 aa).

Residues 9–19 carry the 'HIGH' region motif; sequence PSPTGFLHVGG. Zn(2+)-binding residues include C98, C100, C125, and D127. The short motif at 236–240 is the 'KMSKS' region element; it reads KLSKR. K239 serves as a coordination point for ATP.

Belongs to the class-I aminoacyl-tRNA synthetase family. Glutamate--tRNA ligase type 1 subfamily. As to quaternary structure, monomer. The cofactor is Zn(2+).

Its subcellular location is the cytoplasm. The catalysed reaction is tRNA(Glu) + L-glutamate + ATP = L-glutamyl-tRNA(Glu) + AMP + diphosphate. Functionally, catalyzes the attachment of glutamate to tRNA(Glu) in a two-step reaction: glutamate is first activated by ATP to form Glu-AMP and then transferred to the acceptor end of tRNA(Glu). This chain is Glutamate--tRNA ligase, found in Shewanella baltica (strain OS155 / ATCC BAA-1091).